The sequence spans 237 residues: Uridylate kinase (237 aa).

An ATP-binding site is contributed by 11–14 (KLSG). Residue glycine 53 coordinates UMP. ATP contacts are provided by glycine 54 and arginine 58. UMP contacts are provided by residues aspartate 73 and 134 to 141 (TGNPFFTT). Positions 161, 167, and 170 each coordinate ATP.

It belongs to the UMP kinase family. Homohexamer.

The protein localises to the cytoplasm. The enzyme catalyses UMP + ATP = UDP + ADP. It functions in the pathway pyrimidine metabolism; CTP biosynthesis via de novo pathway; UDP from UMP (UMPK route): step 1/1. With respect to regulation, inhibited by UTP. Functionally, catalyzes the reversible phosphorylation of UMP to UDP. The polypeptide is Uridylate kinase (Paraburkholderia xenovorans (strain LB400)).